Reading from the N-terminus, the 436-residue chain is Xylose isomerase (436 aa).

Active-site residues include histidine 100 and aspartate 103. Mg(2+)-binding residues include glutamate 231, glutamate 267, histidine 270, aspartate 295, aspartate 306, aspartate 308, and aspartate 338.

Belongs to the xylose isomerase family. As to quaternary structure, homotetramer. Mg(2+) is required as a cofactor.

It localises to the cytoplasm. It catalyses the reaction alpha-D-xylose = alpha-D-xylulofuranose. In Chelativorans sp. (strain BNC1), this protein is Xylose isomerase.